The sequence spans 517 residues: Retrotransposon-like protein 1 (517 aa).

Disordered regions lie at residues 1–29 (MEVN…QQQL) and 142–161 (EEER…DARS).

In Caenorhabditis elegans, this protein is Retrotransposon-like protein 1 (retr-1).